A 310-amino-acid chain; its full sequence is MSTNTEIIKNSDLQSLINDKRRLINEIKDFNKSIKPLEFESYQDYFLIKTFKKGISASGHVDIDSLRNKEYGIYYKKIKRNSTQEVGEPIPRNTSSSSSSTRSNSSADISDTEYSGENTPTTTGAASRRRRTRSRAIQRENSLPASLPSISEANANNDDVTISEINGSELPFPIPISEVENIDIASDITERDGIRRRSSRISERDKRRSQSRLGSEEDEEGDGHDGDEGETKIQDLYESLVPKILESRRRSDWILPPKARYTPEKQMRTKPSFKSIKINELVGNKRIRSILSRFEGGVAGIRKRDWDSTQ.

Disordered regions lie at residues 83–155 and 192–230; these read TQEV…EANA and DGIR…DEGE. Residues 92–106 show a composition bias toward low complexity; that stretch reads RNTSSSSSSTRSNSS. Over residues 107 to 120 the composition is skewed to polar residues; the sequence is ADISDTEYSGENTP. Residues 127–136 show a composition bias toward basic residues; sequence SRRRRTRSRA. Residues 139 to 155 show a composition bias toward polar residues; it reads RENSLPASLPSISEANA. A compositionally biased stretch (basic and acidic residues) spans 192-208; that stretch reads DGIRRRSSRISERDKRR. At Ser215 the chain carries Phosphoserine.

Interacts directly with HST1 and SUM1. Required for the interaction between HST1 and SUM1.

It is found in the nucleus. Tethering factor required for histone deacetylase HST1-mediated repression. Probably involved in targeting HST1 to a subset of SUM1-regulated genes. This Saccharomyces cerevisiae (strain ATCC 204508 / S288c) (Baker's yeast) protein is Repression factor of MSEs protein 1 (RFM1).